A 153-amino-acid chain; its full sequence is Nucleoside diphosphate kinase (153 aa).

The ATP site is built by K12, F60, R88, T94, R105, and N115. The active-site Pros-phosphohistidine intermediate is H118.

This sequence belongs to the NDK family. Mg(2+) serves as cofactor.

Its subcellular location is the cytoplasm. It carries out the reaction a 2'-deoxyribonucleoside 5'-diphosphate + ATP = a 2'-deoxyribonucleoside 5'-triphosphate + ADP. It catalyses the reaction a ribonucleoside 5'-diphosphate + ATP = a ribonucleoside 5'-triphosphate + ADP. Its function is as follows. Major role in the synthesis of nucleoside triphosphates other than ATP. The ATP gamma phosphate is transferred to the NDP beta phosphate via a ping-pong mechanism, using a phosphorylated active-site intermediate. The protein is Nucleoside diphosphate kinase of Natronomonas pharaonis (strain ATCC 35678 / DSM 2160 / CIP 103997 / JCM 8858 / NBRC 14720 / NCIMB 2260 / Gabara) (Halobacterium pharaonis).